A 92-amino-acid polypeptide reads, in one-letter code: Small ribosomal subunit protein bS20 (92 aa).

It belongs to the bacterial ribosomal protein bS20 family.

In terms of biological role, binds directly to 16S ribosomal RNA. The polypeptide is Small ribosomal subunit protein bS20 (Thermosipho africanus (strain TCF52B)).